The primary structure comprises 306 residues: Homoserine O-acetyltransferase (306 aa).

The active-site Acyl-thioester intermediate is C142. Substrate-binding residues include K163 and S192. The active-site Proton acceptor is H235. The active site involves E237. R249 contributes to the substrate binding site.

Belongs to the MetA family.

It is found in the cytoplasm. The catalysed reaction is L-homoserine + acetyl-CoA = O-acetyl-L-homoserine + CoA. It participates in amino-acid biosynthesis; L-methionine biosynthesis via de novo pathway; O-acetyl-L-homoserine from L-homoserine: step 1/1. In terms of biological role, transfers an acetyl group from acetyl-CoA to L-homoserine, forming acetyl-L-homoserine. This Clostridium botulinum (strain Alaska E43 / Type E3) protein is Homoserine O-acetyltransferase.